We begin with the raw amino-acid sequence, 358 residues long: N-acylethanolamine-hydrolyzing acid amidase (358 aa).

The first 26 residues, 1–26 (MQGTGHPVRPVLELLLLLLLLAGVGG), serve as a signal peptide directing secretion. Asn39 and Asn108 each carry an N-linked (GlcNAc...) asparagine glycan. Cys127 serves as the catalytic Nucleophile. Asn310, Asn334, and Asn356 each carry an N-linked (GlcNAc...) asparagine glycan.

The protein belongs to the acid ceramidase family. In terms of assembly, heterodimer of an alpha and a beta subunit, produced by autocatalytic cleavage. Post-translationally, N-glycosylated. Tunicamycin treatment causes a reduction in specific activity against N-palmitoylethanolamine. In terms of processing, autoproteolytic cleavage at pH 4.5 gives rise to the alpha and beta subunit. Cleavage gives rise to a conformation change that activates the enzyme. The same catalytic Cys residue mediates the autoproteolytic cleavage and subsequent hydrolysis of lipid substrates.

The protein localises to the lysosome. Its subcellular location is the membrane. The catalysed reaction is N-hexadecanoylethanolamine + H2O = ethanolamine + hexadecanoate. It carries out the reaction an N-(long-chain fatty acyl)ethanolamine + H2O = a long-chain fatty acid + ethanolamine. The enzyme catalyses N-dodecanoylethanolamine + H2O = dodecanoate + ethanolamine. It catalyses the reaction N-tetradecanoylethanolamine + H2O = tetradecanoate + ethanolamine. The catalysed reaction is an N-acylsphing-4-enine + H2O = sphing-4-enine + a fatty acid. It carries out the reaction N-hexadecanoylsphing-4-enine + H2O = sphing-4-enine + hexadecanoate. The enzyme catalyses N-dodecanoylsphing-4-enine + H2O = dodecanoate + sphing-4-enine. Its pathway is lipid metabolism; fatty acid metabolism. Its function is as follows. Degrades bioactive fatty acid amides to their corresponding acids, with the following preference: N-palmitoylethanolamine &gt; N-myristoylethanolamine &gt; N-stearoylethanolamine &gt; N-oleoylethanolamine &gt; N-linoleoylethanolamine &gt; N-arachidonoylethanolamine. The protein is N-acylethanolamine-hydrolyzing acid amidase of Oryctolagus cuniculus (Rabbit).